The sequence spans 734 residues: Photosystem I P700 chlorophyll a apoprotein A2 (734 aa).

The next 8 membrane-spanning stretches (helical) occupy residues 46–69, 135–158, 175–199, 273–291, 330–353, 369–395, 417–439, and 517–535; these read IFAS…FHVA, LYTG…LHLQ, LNHH…HVAI, MAHH…GHMY, IHFQ…QHMY, AALY…IFFI, AIIS…LYVH, and FLVH…LILV. Cys-559 and Cys-568 together coordinate [4Fe-4S] cluster. 2 consecutive transmembrane segments (helical) span residues 575 to 596 and 643 to 665; these read AFYL…YWHW and LSVW…MFLI. Residues His-654, Met-662, and Tyr-670 each coordinate chlorophyll a. Trp-671 provides a ligand contact to phylloquinone. The chain crosses the membrane as a helical span at residues 707-727; that stretch reads LVGLAHFSVGYIFTYAAFLIA.

It belongs to the PsaA/PsaB family. In terms of assembly, the PsaA/B heterodimer binds the P700 chlorophyll special pair and subsequent electron acceptors. PSI consists of a core antenna complex that captures photons, and an electron transfer chain that converts photonic excitation into a charge separation. The eukaryotic PSI reaction center is composed of at least 11 subunits. Requires P700 is a chlorophyll a/chlorophyll a' dimer, A0 is one or more chlorophyll a, A1 is one or both phylloquinones and FX is a shared 4Fe-4S iron-sulfur center. as cofactor.

It localises to the plastid. The protein localises to the chloroplast thylakoid membrane. It catalyses the reaction reduced [plastocyanin] + hnu + oxidized [2Fe-2S]-[ferredoxin] = oxidized [plastocyanin] + reduced [2Fe-2S]-[ferredoxin]. Functionally, psaA and PsaB bind P700, the primary electron donor of photosystem I (PSI), as well as the electron acceptors A0, A1 and FX. PSI is a plastocyanin-ferredoxin oxidoreductase, converting photonic excitation into a charge separation, which transfers an electron from the donor P700 chlorophyll pair to the spectroscopically characterized acceptors A0, A1, FX, FA and FB in turn. Oxidized P700 is reduced on the lumenal side of the thylakoid membrane by plastocyanin. The protein is Photosystem I P700 chlorophyll a apoprotein A2 of Nandina domestica (Heavenly bamboo).